Here is a 475-residue protein sequence, read N- to C-terminus: Ankyrin repeat, SAM and basic leucine zipper domain-containing protein 1 (475 aa).

A disordered region spans residues 1–25 (MAAGPLRGLAVAGGGESSDSEDDGW). Ser-17, Ser-18, and Ser-20 each carry phosphoserine. ANK repeat units lie at residues 45 to 74 (ERQE…SVDT), 78 to 107 (YGWT…NASF), 110 to 144 (DKQT…DPNV), 148 to 177 (RLMT…EVNT), 181 to 210 (NGYT…NKMI), and 214 to 243 (DGKT…PLEG). Positions 272 to 334 (SYTAFGDLEI…KIMAALKELE (63 aa)) constitute an SAM domain.

In terms of assembly, interacts with DDX4, PIWIL1, RANBP9 and TDRD1.

The protein resides in the cytoplasm. In terms of biological role, plays a central role during spermatogenesis by repressing transposable elements and preventing their mobilization, which is essential for the germline integrity. Acts via the piRNA metabolic process, which mediates the repression of transposable elements during meiosis by forming complexes composed of piRNAs and Piwi proteins and governs the methylation and subsequent repression of transposons. Its association with pi-bodies suggests a participation in the primary piRNAs metabolic process. Required prior to the pachytene stage to facilitate the production of multiple types of piRNAs, including those associated with repeats involved in the regulation of retrotransposons. May act by mediating protein-protein interactions during germ cell maturation. The polypeptide is Ankyrin repeat, SAM and basic leucine zipper domain-containing protein 1 (ASZ1) (Bos taurus (Bovine)).